Reading from the N-terminus, the 261-residue chain is [LysW]-aminoadipate/[LysW]-glutamate kinase (261 aa).

Substrate-binding positions include 35-36 (GG), Arg-62, and Asn-166.

Belongs to the acetylglutamate kinase family. LysZ subfamily.

The protein localises to the cytoplasm. It catalyses the reaction [amino-group carrier protein]-C-terminal-N-(1,4-dicarboxybutan-1-yl)-L-glutamine + ATP = [amino-group carrier protein]-C-terminal-N-(1-carboxy-5-phosphooxy-5-oxopentan-1-yl)-L-glutamine + ADP. The catalysed reaction is [amino-group carrier protein]-C-terminal-gamma-(L-glutamyl)-L-glutamate + ATP = [amino-group carrier protein]-C-terminal-gamma-(5-phospho-L-glutamyl)-L-glutamate + ADP. It participates in amino-acid biosynthesis; L-lysine biosynthesis via AAA pathway; L-lysine from L-alpha-aminoadipate (Thermus route): step 2/5. Its pathway is amino-acid biosynthesis; L-arginine biosynthesis. Its function is as follows. Involved in both the arginine and lysine biosynthetic pathways. Phosphorylates the LysW-bound precursors glutamate (for arginine biosynthesis), respectively alpha-aminoadipate (for lysine biosynthesis). In Sulfurisphaera tokodaii (strain DSM 16993 / JCM 10545 / NBRC 100140 / 7) (Sulfolobus tokodaii), this protein is [LysW]-aminoadipate/[LysW]-glutamate kinase.